A 230-amino-acid chain; its full sequence is 3,4-dihydroxy-2-butanone 4-phosphate synthase (230 aa).

Residues 42-43 (RE), aspartate 47, 155-159 (RRGHT), and glutamate 179 each bind D-ribulose 5-phosphate. Glutamate 43 serves as a coordination point for Mg(2+). Histidine 158 contacts Mg(2+).

It belongs to the DHBP synthase family. In terms of assembly, homodimer. The cofactor is Mg(2+). Mn(2+) serves as cofactor.

It catalyses the reaction D-ribulose 5-phosphate = (2S)-2-hydroxy-3-oxobutyl phosphate + formate + H(+). Its pathway is cofactor biosynthesis; riboflavin biosynthesis; 2-hydroxy-3-oxobutyl phosphate from D-ribulose 5-phosphate: step 1/1. Catalyzes the conversion of D-ribulose 5-phosphate to formate and 3,4-dihydroxy-2-butanone 4-phosphate. This is 3,4-dihydroxy-2-butanone 4-phosphate synthase from Bordetella pertussis (strain Tohama I / ATCC BAA-589 / NCTC 13251).